A 642-amino-acid polypeptide reads, in one-letter code: Poly(A) polymerase beta (642 aa).

ATP contacts are provided by residues 101–103, T110, 114–116, D168, K229, Y238, and 247–248; these read FGS, DID, and GV. Residues D114, D116, and D168 each coordinate Mg(2+). 2 disordered regions span residues 530–553 and 620–642; these read SENS…GNPQ and LVNH…ILGV. Polar residues predominate over residues 620–636; it reads LVNHPSRPSGNTATNIP.

Belongs to the poly(A) polymerase family. Interacts with GSG1. It depends on Mg(2+) as a cofactor. Requires Mn(2+) as cofactor. As to expression, testis specific.

It is found in the cytoplasm. The protein localises to the nucleus. It catalyses the reaction RNA(n) + ATP = RNA(n)-3'-adenine ribonucleotide + diphosphate. The protein is Poly(A) polymerase beta of Mus musculus (Mouse).